We begin with the raw amino-acid sequence, 406 residues long: Peptidase T (406 aa).

His82 contributes to the Zn(2+) binding site. Asp84 is a catalytic residue. Residue Asp142 participates in Zn(2+) binding. The active-site Proton acceptor is Glu176. 3 residues coordinate Zn(2+): Glu177, Asp199, and His381.

The protein belongs to the peptidase M20B family. The cofactor is Zn(2+).

It localises to the cytoplasm. The enzyme catalyses Release of the N-terminal residue from a tripeptide.. Its function is as follows. Cleaves the N-terminal amino acid of tripeptides. This is Peptidase T from Streptococcus agalactiae serotype Ia (strain ATCC 27591 / A909 / CDC SS700).